The primary structure comprises 584 residues: Sodium/calcium exchanger NCL1 (584 aa).

5 helical membrane-spanning segments follow: residues 77 to 97 (FLPC…YGFL), 120 to 140 (LVGG…LVLV), 154 to 174 (VLIG…LLWG), 215 to 235 (AARI…PKML), and 245 to 265 (VLLA…YQVF). EF-hand domains are found at residues 305–340 (PNED…INFE) and 345–380 (DKND…WLNE). Ca(2+) is bound by residues Asp318, Asp320, Ser322, Thr324, Glu329, Asp358, Ser360, Asn362, and Glu369. The next 5 helical transmembrane spans lie at 426 to 446 (WCIT…AAFA), 466 to 486 (FISF…SAII), 504 to 524 (YGGV…LIYI), 531 to 551 (FSSE…FTSF), and 561 to 581 (LVAY…DFVF).

It belongs to the Ca(2+):cation antiporter (CaCA) (TC 2.A.19) family.

It localises to the cell membrane. Its function is as follows. May function as a sodium/calcium exchanger (NCX) and participate in the maintenance of calcium homeostasis. May play a role abiotic stress responses. The protein is Sodium/calcium exchanger NCL1 of Oryza sativa subsp. japonica (Rice).